We begin with the raw amino-acid sequence, 644 residues long: Beta-mannosyltransferase 2 (644 aa).

Over 1–6 (MRTRLN) the chain is Cytoplasmic. A helical transmembrane segment spans residues 7–27 (FLLLCIASVLSVIWIGVLLTW). At 28–644 (NDNNLGGISL…NDKKDLKIRQ (617 aa)) the chain is on the extracellular side. N-linked (GlcNAc...) asparagine glycosylation is present at Asn484. Residues 512–644 (TRGEAERRRR…NDKKDLKIRQ (133 aa)) are a coiled coil. A disordered region spans residues 517-644 (ERRRRVAEER…NDKKDLKIRQ (128 aa)).

Belongs to the BMT family.

Its subcellular location is the membrane. Its function is as follows. Beta-mannosyltransferase involved in cell wall biosynthesis. Initiates the beta-mannosylation of core N-linked glycans. In Komagataella phaffii (strain GS115 / ATCC 20864) (Yeast), this protein is Beta-mannosyltransferase 2 (BMT2).